The sequence spans 234 residues: bZIP transcription factor 1 (234 aa).

The disordered stretch occupies residues 67–134 (RAQSDGSNAL…DKQRNAQQQL (68 aa)). Residues 70–86 (SDGSNALLSSIGPSGTT) show a composition bias toward polar residues. Basic and acidic residues predominate over residues 88–128 (RPRDEMDCFTDTHKHKRGDGNKSRRREQCRANQARYRDKQR). The bZIP domain maps to 106-169 (DGNKSRRREQ…RTNQSPWNTV (64 aa)). The segment at 109 to 128 (KSRRREQCRANQARYRDKQR) is basic motif. Residues 134-155 (LERSVEQLQSELSTLKHRNLDL) form a leucine-zipper region.

It belongs to the bZIP family. In terms of assembly, interacts with PKZ1.

The protein localises to the nucleus. Required for normal zoospore movement, formation of appressoria by germinated zoospore cysts and plant infection. This chain is bZIP transcription factor 1, found in Phytophthora infestans (Potato late blight agent).